The primary structure comprises 108 residues: uncharacterized protein (108 aa).

A compositionally biased stretch (basic and acidic residues) spans 1–10; the sequence is MDMLHNKCSD. A disordered region spans residues 1–27; it reads MDMLHNKCSDAIKSTSNSNLSNEVDKQ. Residues 12-22 are compositionally biased toward polar residues; it reads IKSTSNSNLSN.

This is an uncharacterized protein from Saccharomyces cerevisiae (strain ATCC 204508 / S288c) (Baker's yeast).